We begin with the raw amino-acid sequence, 263 residues long: Phosphate import ATP-binding protein PstB (263 aa).

Positions isoleucine 17–isoleucine 258 constitute an ABC transporter domain. Glycine 49 to serine 56 is a binding site for ATP.

Belongs to the ABC transporter superfamily. Phosphate importer (TC 3.A.1.7) family. As to quaternary structure, the complex is composed of two ATP-binding proteins (PstB), two transmembrane proteins (PstC and PstA) and a solute-binding protein (PstS).

It is found in the cell inner membrane. It carries out the reaction phosphate(out) + ATP + H2O = ADP + 2 phosphate(in) + H(+). Its function is as follows. Part of the ABC transporter complex PstSACB involved in phosphate import. Responsible for energy coupling to the transport system. The protein is Phosphate import ATP-binding protein PstB of Polaromonas sp. (strain JS666 / ATCC BAA-500).